We begin with the raw amino-acid sequence, 467 residues long: Transcription factor bHLH3 (467 aa).

The bHLH domain occupies 316-365; sequence EEALNHVEAERQRREKLNQRFYALRAVVPNISKMDKASLLADAITYITDM.

Homodimer.

The protein resides in the nucleus. In Arabidopsis thaliana (Mouse-ear cress), this protein is Transcription factor bHLH3 (BHLH3).